Consider the following 348-residue polypeptide: D-erythrose-4-phosphate dehydrogenase (348 aa).

NAD(+) is bound by residues 12–13 and Arg-81; that span reads RI. Substrate contacts are provided by residues 154 to 156, Arg-200, 213 to 214, and Arg-236; these read SCT and TK. Cys-155 acts as the Nucleophile in catalysis. Asn-318 serves as a coordination point for NAD(+).

Belongs to the glyceraldehyde-3-phosphate dehydrogenase family. Epd subfamily. As to quaternary structure, homotetramer.

It is found in the cytoplasm. The enzyme catalyses D-erythrose 4-phosphate + NAD(+) + H2O = 4-phospho-D-erythronate + NADH + 2 H(+). It functions in the pathway cofactor biosynthesis; pyridoxine 5'-phosphate biosynthesis; pyridoxine 5'-phosphate from D-erythrose 4-phosphate: step 1/5. Its function is as follows. Catalyzes the NAD-dependent conversion of D-erythrose 4-phosphate to 4-phosphoerythronate. This Salmonella gallinarum (strain 287/91 / NCTC 13346) protein is D-erythrose-4-phosphate dehydrogenase.